Consider the following 230-residue polypeptide: Cytochrome c oxidase subunit 2 (230 aa).

Residues 1–14 lie on the Mitochondrial intermembrane side of the membrane; sequence MAHPSQLGFQDAAS. Residues 15–45 traverse the membrane as a helical segment; the sequence is PVMEELLHFHDHALMIVLLISTLVLYIIVAM. The Mitochondrial matrix portion of the chain corresponds to 46–59; the sequence is VSTKLTNMYILDSQ. A helical membrane pass occupies residues 60–87; the sequence is EIEIVWTVLPAVILILIALPSLRILYLM. Residues 88-230 are Mitochondrial intermembrane-facing; it reads DEINDPHLTI…KWSTMMLEDA (143 aa). H161, C196, E198, C200, H204, and M207 together coordinate Cu cation. Residue E198 participates in Mg(2+) binding.

Belongs to the cytochrome c oxidase subunit 2 family. Component of the cytochrome c oxidase (complex IV, CIV), a multisubunit enzyme composed of 14 subunits. The complex is composed of a catalytic core of 3 subunits MT-CO1, MT-CO2 and MT-CO3, encoded in the mitochondrial DNA, and 11 supernumerary subunits COX4I, COX5A, COX5B, COX6A, COX6B, COX6C, COX7A, COX7B, COX7C, COX8 and NDUFA4, which are encoded in the nuclear genome. The complex exists as a monomer or a dimer and forms supercomplexes (SCs) in the inner mitochondrial membrane with NADH-ubiquinone oxidoreductase (complex I, CI) and ubiquinol-cytochrome c oxidoreductase (cytochrome b-c1 complex, complex III, CIII), resulting in different assemblies (supercomplex SCI(1)III(2)IV(1) and megacomplex MCI(2)III(2)IV(2)). Found in a complex with TMEM177, COA6, COX18, COX20, SCO1 and SCO2. Interacts with TMEM177 in a COX20-dependent manner. Interacts with COX20. Interacts with COX16. Cu cation serves as cofactor.

It is found in the mitochondrion inner membrane. It carries out the reaction 4 Fe(II)-[cytochrome c] + O2 + 8 H(+)(in) = 4 Fe(III)-[cytochrome c] + 2 H2O + 4 H(+)(out). Functionally, component of the cytochrome c oxidase, the last enzyme in the mitochondrial electron transport chain which drives oxidative phosphorylation. The respiratory chain contains 3 multisubunit complexes succinate dehydrogenase (complex II, CII), ubiquinol-cytochrome c oxidoreductase (cytochrome b-c1 complex, complex III, CIII) and cytochrome c oxidase (complex IV, CIV), that cooperate to transfer electrons derived from NADH and succinate to molecular oxygen, creating an electrochemical gradient over the inner membrane that drives transmembrane transport and the ATP synthase. Cytochrome c oxidase is the component of the respiratory chain that catalyzes the reduction of oxygen to water. Electrons originating from reduced cytochrome c in the intermembrane space (IMS) are transferred via the dinuclear copper A center (CU(A)) of subunit 2 and heme A of subunit 1 to the active site in subunit 1, a binuclear center (BNC) formed by heme A3 and copper B (CU(B)). The BNC reduces molecular oxygen to 2 water molecules using 4 electrons from cytochrome c in the IMS and 4 protons from the mitochondrial matrix. This is Cytochrome c oxidase subunit 2 (mt-co2) from Oncorhynchus mykiss (Rainbow trout).